A 588-amino-acid polypeptide reads, in one-letter code: Putative calcium-binding mitochondrial carrier F55A11.4 (588 aa).

Over residues 1–14 (MINKNEQTESTSGA) the composition is skewed to polar residues. Positions 1–25 (MINKNEQTESTSGAAEQKEDDEEQY) are disordered. EF-hand domains follow at residues 73-108 (EKER…ETPH), 109-139 (IPAN…SYVL), 140-175 (ENEQ…IGVP), and 176-211 (LDDH…YPSS). Residues D86, D88, D90, T92, and D97 each contribute to the Ca(2+) site. Ca(2+)-binding residues include D153, N155, D157, and E164. Solcar repeat units follow at residues 246-332 (GIWW…LKRL), 342-428 (ISTF…LKRT), and 440-529 (PGVL…VRTG). The next 6 helical transmembrane spans lie at 252–269 (LVAG…TAPF), 307–326 (GNGI…FMCY), 352–365 (SAAG…IYPM), 403–422 (GYLP…LAIY), 446–463 (LACG…SYPF), and 504–523 (GITP…YVVY).

This sequence belongs to the mitochondrial carrier (TC 2.A.29) family. As to quaternary structure, homodimer (via N-terminus).

The protein resides in the mitochondrion inner membrane. Its function is as follows. Mitochondrial and calcium-binding carrier that catalyzes the calcium-dependent exchange of cytoplasmic glutamate with mitochondrial aspartate across the mitochondrial inner membrane. This Caenorhabditis elegans protein is Putative calcium-binding mitochondrial carrier F55A11.4.